Consider the following 558-residue polypeptide: SPATS2-like protein (558 aa).

An N-acetylalanine modification is found at Ala-2. Over residues 63–79 (GKKKNNKRKRSKSKQHQ) the composition is skewed to basic residues. Disordered stretches follow at residues 63 to 134 (GKKK…EKKI) and 157 to 201 (KLSL…KSNT). Positions 80–92 (GNKDAKDKVERPE) are enriched in basic and acidic residues. Ser-120 is modified (phosphoserine). A coiled-coil region spans residues 271 to 344 (LMAEMDKVKE…ARFSCDIEQL (74 aa)). Residues 380–525 (TSGKQSNFSR…DTSEARPFRG (146 aa)) are disordered. 3 stretches are compositionally biased toward polar residues: residues 381-390 (SGKQSNFSRK), 410-432 (SLPS…GSSN), and 440-456 (QYHN…QGSG). Ser-455 bears the Phosphoserine mark. Over residues 469–485 (HEHRRQPHNGFRPKNKG) the composition is skewed to basic residues. Residues 513–522 (HAADTSEARP) are compositionally biased toward basic and acidic residues.

The protein belongs to the SPATS2 family.

The protein resides in the cytoplasm. The protein localises to the nucleus. Its subcellular location is the nucleolus. This is SPATS2-like protein (SPATS2L) from Homo sapiens (Human).